Here is a 453-residue protein sequence, read N- to C-terminus: Putative F-box/FBD/LRR-repeat protein At1g66290 (453 aa).

The disordered stretch occupies residues 1 to 28 (MDEDGERRVRTKRSCSPESSDNGSGDEV). A compositionally biased stretch (polar residues) spans 14–23 (SCSPESSDNG). The F-box domain maps to 28 to 81 (VDWISDLPEALIVLVLLNLPTKDVIKTSVLSTKWRNIWRYVPRLDLDNRHFTEF). LRR repeat units follow at residues 155–179 (SLKL…VLVL), 210–235 (LDNV…SSKS), 246–269 (APKL…NLSS), 305–329 (LSRV…RCEP), and 358–381 (CSNL…IISE). The 51-residue stretch at 373–423 (RKRTSIISEPRCLLSSLEYVKIEFALDKGKMELVRYLLENSPILKKLTLSL) folds into the FBD domain.

In Arabidopsis thaliana (Mouse-ear cress), this protein is Putative F-box/FBD/LRR-repeat protein At1g66290.